We begin with the raw amino-acid sequence, 213 residues long: Ras-related protein Rab-25 (213 aa).

GTP is bound by residues S21, G24, K25, T26, N27, S38, H39, T43, and T44. T26 is a binding site for Mg(2+). Short sequence motifs (switch) lie at residues 35 to 49 (NEFS…GVEF) and 67 to 84 (DTAG…YYRG). T44 and D67 together coordinate Mg(2+). Positions 70, 125, 126, 128, 156, and 157 each coordinate GTP. Residues C209 and C210 are each lipidated (S-geranylgeranyl cysteine). C210 is subject to Cysteine methyl ester. Positions 211–213 (INL) are cleaved as a propeptide — removed in mature form.

The protein belongs to the small GTPase superfamily. Rab family. Interacts (GTP-bound form) with RAB11FIP1, RAB11FIP2, RAB11FIP3 and RAB11FIP4. Interacts (via the hypervariable C-terminal region) with ITGB1 (via the cytoplasmic region); the interaction is GTP-dependent. Interacts with ITGAV. Associates with the integrin alpha-V/beta-1 heterodimer. Interacts with VPS33B. The cofactor is Mg(2+). As to expression, expression is restricted to epithelial cells. Expressed in the gastrointestinal mucosa, (highest expression seen in the ileum and colon), kidney, and lung. A very minor and variable level of expression is seen in the splenic tissue.

The protein localises to the cell membrane. It is found in the cell projection. The protein resides in the pseudopodium membrane. Its subcellular location is the cytoplasmic vesicle. The enzyme catalyses GTP + H2O = GDP + phosphate + H(+). Its activity is regulated as follows. Regulated by guanine nucleotide exchange factors (GEFs) which promote the exchange of bound GDP for free GTP. Regulated by GTPase activating proteins (GAPs) which increase the GTP hydrolysis activity. Inhibited by GDP dissociation inhibitors (GDIs) which prevent Rab-GDP dissociation. The small GTPases Rab are key regulators of intracellular membrane trafficking, from the formation of transport vesicles to their fusion with membranes. Rabs cycle between an inactive GDP-bound form and an active GTP-bound form that is able to recruit to membranes different set of downstream effectors directly responsible for vesicle formation, movement, tethering and fusion. RAB25 regulates epithelial cell differentiation, proliferation and survival, thereby playing key roles in tumorigenesis. Promotes invasive migration of cells in which it functions to localize and maintain integrin alpha-V/beta-1 at the tips of extending pseudopodia. Involved in the regulation of epithelial morphogenesis through the control of CLDN4 expression and localization at tight junctions. May selectively regulate the apical recycling pathway. Together with MYO5B regulates transcytosis. The sequence is that of Ras-related protein Rab-25 (RAB25) from Oryctolagus cuniculus (Rabbit).